A 187-amino-acid chain; its full sequence is Elongation factor P (187 aa).

It belongs to the elongation factor P family.

Its subcellular location is the cytoplasm. It functions in the pathway protein biosynthesis; polypeptide chain elongation. Functionally, involved in peptide bond synthesis. Stimulates efficient translation and peptide-bond synthesis on native or reconstituted 70S ribosomes in vitro. Probably functions indirectly by altering the affinity of the ribosome for aminoacyl-tRNA, thus increasing their reactivity as acceptors for peptidyl transferase. The sequence is that of Elongation factor P from Corynebacterium diphtheriae (strain ATCC 700971 / NCTC 13129 / Biotype gravis).